We begin with the raw amino-acid sequence, 507 residues long: Archaeal-type glutamate synthase [NADPH] (507 aa).

4Fe-4S ferredoxin-type domains are found at residues 10–39 (FVVE…YDEN) and 41–70 (NRVY…VRRN). Cys19, Cys22, Cys25, Cys29, Cys50, Cys53, Cys56, and Cys60 together coordinate [4Fe-4S] cluster.

It belongs to the glutamate synthase family. FMN serves as cofactor.

It catalyses the reaction 2 L-glutamate + NADP(+) = L-glutamine + 2-oxoglutarate + NADPH + H(+). This is Archaeal-type glutamate synthase [NADPH] from Thermotoga neapolitana (strain ATCC 49049 / DSM 4359 / NBRC 107923 / NS-E).